Here is a 310-residue protein sequence, read N- to C-terminus: Methionyl-tRNA formyltransferase (310 aa).

(6S)-5,6,7,8-tetrahydrofolate is bound at residue 109-112 (SLLP). The disordered stretch occupies residues 283–310 (QPQGKKAMPAADWARGARIGDGERFGDD). Positions 300 to 310 (RIGDGERFGDD) are enriched in basic and acidic residues.

The protein belongs to the Fmt family.

It carries out the reaction L-methionyl-tRNA(fMet) + (6R)-10-formyltetrahydrofolate = N-formyl-L-methionyl-tRNA(fMet) + (6S)-5,6,7,8-tetrahydrofolate + H(+). Its function is as follows. Attaches a formyl group to the free amino group of methionyl-tRNA(fMet). The formyl group appears to play a dual role in the initiator identity of N-formylmethionyl-tRNA by promoting its recognition by IF2 and preventing the misappropriation of this tRNA by the elongation apparatus. The sequence is that of Methionyl-tRNA formyltransferase from Thermobifida fusca (strain YX).